Here is a 121-residue protein sequence, read N- to C-terminus: Immunoglobulin kappa variable 4-1 (121 aa).

A signal peptide spans 1–20 (MVLQTQVFISLLLWISGAYG). Positions 21–43 (DIVMTQSPDSLAVSLGERATINC) are framework-1. Positions 21–121 (DIVMTQSPDS…YYCQQYYSTP (101 aa)) constitute an Ig-like domain. Cysteines 43 and 114 form a disulfide. Residues 44–60 (KSSQSVLYSSNNKNYLA) form a complementarity-determining-1 region. Residues 61–75 (WYQQKPGQPPKLLIY) are framework-2. Residues 76 to 82 (WASTRES) are complementarity-determining-2. The interval 83–114 (GVPDRFSGSGSGTDFTLTISSLQAEDVAVYYC) is framework-3. A complementarity-determining-3 region spans residues 115-121 (QQYYSTP).

As to quaternary structure, immunoglobulins are composed of two identical heavy chains and two identical light chains; disulfide-linked.

It is found in the secreted. The protein localises to the cell membrane. V segment of the variable domain of immunoglobulins light chain that participates in the antigen recognition. Immunoglobulins, also known as antibodies, are membrane-bound or secreted glycoproteins produced by B lymphocytes. In the recognition phase of humoral immunity, the membrane-bound immunoglobulins serve as receptors which, upon binding of a specific antigen, trigger the clonal expansion and differentiation of B lymphocytes into immunoglobulins-secreting plasma cells. Secreted immunoglobulins mediate the effector phase of humoral immunity, which results in the elimination of bound antigens. The antigen binding site is formed by the variable domain of one heavy chain, together with that of its associated light chain. Thus, each immunoglobulin has two antigen binding sites with remarkable affinity for a particular antigen. The variable domains are assembled by a process called V-(D)-J rearrangement and can then be subjected to somatic hypermutations which, after exposure to antigen and selection, allow affinity maturation for a particular antigen. The polypeptide is Immunoglobulin kappa variable 4-1 (Homo sapiens (Human)).